The following is a 243-amino-acid chain: 3-deoxy-manno-octulosonate cytidylyltransferase (243 aa).

Belongs to the KdsB family.

It is found in the cytoplasm. It catalyses the reaction 3-deoxy-alpha-D-manno-oct-2-ulosonate + CTP = CMP-3-deoxy-beta-D-manno-octulosonate + diphosphate. The protein operates within nucleotide-sugar biosynthesis; CMP-3-deoxy-D-manno-octulosonate biosynthesis; CMP-3-deoxy-D-manno-octulosonate from 3-deoxy-D-manno-octulosonate and CTP: step 1/1. Its pathway is bacterial outer membrane biogenesis; lipopolysaccharide biosynthesis. Its function is as follows. Activates KDO (a required 8-carbon sugar) for incorporation into bacterial lipopolysaccharide in Gram-negative bacteria. This chain is 3-deoxy-manno-octulosonate cytidylyltransferase, found in Helicobacter pylori (strain HPAG1).